The following is a 247-amino-acid chain: Pyrroloquinoline-quinone synthase (247 aa).

It belongs to the PqqC family.

It catalyses the reaction 6-(2-amino-2-carboxyethyl)-7,8-dioxo-1,2,3,4,7,8-hexahydroquinoline-2,4-dicarboxylate + 3 O2 = pyrroloquinoline quinone + 2 H2O2 + 2 H2O + H(+). It participates in cofactor biosynthesis; pyrroloquinoline quinone biosynthesis. Ring cyclization and eight-electron oxidation of 3a-(2-amino-2-carboxyethyl)-4,5-dioxo-4,5,6,7,8,9-hexahydroquinoline-7,9-dicarboxylic-acid to PQQ. The chain is Pyrroloquinoline-quinone synthase from Rhizobium rhizogenes (strain K84 / ATCC BAA-868) (Agrobacterium radiobacter).